The following is a 107-amino-acid chain: Putative double-stranded DNA mimic protein Spro_2690 (107 aa).

This sequence belongs to the putative dsDNA mimic protein family.

Functionally, may act as a double-stranded DNA (dsDNA) mimic. Probably regulates the activity of a dsDNA-binding protein. In Serratia proteamaculans (strain 568), this protein is Putative double-stranded DNA mimic protein Spro_2690.